The sequence spans 875 residues: Cytosolic phospholipase A2 epsilon (875 aa).

Positions 16-70 are disordered; the sequence is THASEGHHGLGTSMLVPKNPQGEEDSKLGRNCSGFEDAQDPQTAVPSSPLLSMAS. The region spanning 60 to 183 is the C2 domain; the sequence is VPSSPLLSMA…CLRNKTHVKF (124 aa). Positions 61-70 are enriched in low complexity; the sequence is PSSPLLSMAS. D97, D103, D153, D155, and D161 together coordinate Ca(2+). A PLA2c domain is found at 332 to 875; that stretch reads PCSDTLDVRL…KKRMRSQCPS (544 aa). S420 acts as the Nucleophile in catalysis. The Proton acceptor role is filled by D708. S808 carries the post-translational modification Phosphoserine. Positions 865-875 are required for localization at membrane structures; sequence EKKRMRSQCPS.

It depends on Ca(2+) as a cofactor. As to expression, predominantly expressed in brain, heart, skeletal muscle, testis and thyroid. Expressed in neurons but not astrocytes or microglia. Expressed at lower level in stomach.

It localises to the cytoplasm. Its subcellular location is the cytosol. The protein resides in the early endosome membrane. It is found in the lysosome membrane. The protein localises to the cell membrane. It catalyses the reaction a 1,2-diacyl-sn-glycero-3-phosphoethanolamine + a 1,2-diacyl-sn-glycero-3-phosphocholine = an N-acyl-1,2-diacyl-sn-glycero-3-phosphoethanolamine + a 2-acyl-sn-glycero-3-phosphocholine + H(+). It carries out the reaction 1-hexadecanoyl-2-octadecanoyl-sn-glycero-3-phosphocholine + 1,2-di-(9Z-octadecenoyl)-sn-glycero-3-phosphoethanolamine = 2-octadecanoyl-sn-glycero-3-phosphocholine + N-hexadecanoyl-1,2-di-(9Z-octadecenoyl)-sn-glycero-3-phosphoethanolamine + H(+). The enzyme catalyses 1-octadecanoyl-2-hexadecanoyl-sn-glycero-3-phosphocholine + 1,2-di-(9Z-octadecenoyl)-sn-glycero-3-phosphoethanolamine = N-octadecanoyl-1,2-di-(9Z-octadecenoyl)-sn-glycero-3-phosphoethanolamine + 2-hexadecanoyl-sn-glycero-3-phosphocholine + H(+). The catalysed reaction is 1,2-di-(9Z-octadecenoyl)-sn-glycero-3-phosphoethanolamine + 1,2-dihexadecanoyl-sn-glycero-3-phosphocholine = N-hexadecanoyl-1,2-di-(9Z-octadecenoyl)-sn-glycero-3-phosphoethanolamine + 2-hexadecanoyl-sn-glycero-3-phosphocholine + H(+). It catalyses the reaction 1,2-di-(5Z,8Z,11Z,14Z-eicosatetraenoyl)-sn-glycero-3-phosphocholine + 1,2-di-(9Z-octadecenoyl)-sn-glycero-3-phosphoethanolamine = N-(5Z,8Z,11Z,14Z-eicosatetraenoyl)-1,2-di-(9Z-octadecenoyl)-sn-glycero-3-phosphoethanolamine + 2-(5Z,8Z,11Z,14Z)-eicosatetraenoyl-sn-glycero-3-phosphocholine + H(+). It carries out the reaction 2 1,2-di-(9Z-octadecenoyl)-sn-glycero-3-phosphoethanolamine = N,1,2-tri-(9Z-octadecenoyl)-sn-glycero-3-phosphoethanolamine + 2-(9Z-octadecenoyl)-sn-glycero-3-phosphoethanolamine + H(+). The enzyme catalyses a 1,2-diacyl-sn-glycero-3-phosphocholine + H2O = a 1-acyl-sn-glycero-3-phosphocholine + a fatty acid + H(+). The catalysed reaction is 1-(1Z-octadecenyl)-2-(9Z-octadecenoyl)-sn-glycero-3-phosphoethanolamine + 1,2-dihexadecanoyl-sn-glycero-3-phosphocholine = 1-O-(1Z-octadecenoyl)-2-(9Z-octadecenoyl)-sn-glycero-3-phospho-N-hexadecanoyl-ethanolamine + 2-hexadecanoyl-sn-glycero-3-phosphocholine + H(+). It catalyses the reaction 1-hexadecanoyl-2-(5Z,8Z,11Z,14Z-eicosatetraenoyl)-sn-glycero-3-phosphocholine + H2O = 1-hexadecanoyl-sn-glycero-3-phosphocholine + (5Z,8Z,11Z,14Z)-eicosatetraenoate + H(+). It carries out the reaction 1-hexadecanoyl-sn-glycero-3-phosphocholine + H2O = sn-glycerol 3-phosphocholine + hexadecanoate + H(+). Stimulated by cytosolic Ca(2+). Stimulated by anionic phospholipids such as phosphatidylserine. Its function is as follows. Calcium-dependent N-acyltransferase involved in the biosynthesis of N-acyl ethanolamines (NAEs) in the brain. Transfers the sn-1 fatty acyl chain of phosphatidylcholine (fatty acyl donor) to the amine group of phosphatidylethanolamine (fatty acyl acceptor) to generate N-acyl phosphatidylethanolamine (NAPE). Similarly can use plasmenylethanolamine as a fatty acyl acceptor to form N-acyl plasmenylethanolamine (N-Acyl-PlsEt). Both NAPE and N-Acyl-PlsEt can serve as precursors of bioactive NAEs like N-arachidonoyl phosphatidylethanolamine also called anandamide. Has weak phospholipase A2 and lysophospholipase activities. Regulates intracellular membrane trafficking that requires modulation of membrane curvature as it occurs by enrichment in lysophospholipids. Promotes tubule formation involved in clathrin-independent endocytotic trafficking and cargo recycling. The chain is Cytosolic phospholipase A2 epsilon (Pla2g4e) from Mus musculus (Mouse).